A 465-amino-acid polypeptide reads, in one-letter code: Hepatocyte nuclear factor 6 (465 aa).

2 disordered regions span residues 15-84 and 119-141; these read GVSH…GPLH and SDKF…HQRL. Positions 123 to 140 are enriched in basic residues; it reads PHHHHHHHHHHHPHHHQR. The segment at residues 283–369 is a DNA-binding region (CUT); it reads GSNSGQMEEI…QRMSALRLAA (87 aa). The segment at residues 385-444 is a DNA-binding region (homeobox); it reads PKKPRLVFTDVQRRTLHAIFKENKRPSKELQITISQQLGLELSTVSNFFMNARRRSLDKW. A disordered region spans residues 443-465; it reads KWQDEGGSNSGSSSSSSSTCTKA. Over residues 448–465 the composition is skewed to low complexity; sequence GGSNSGSSSSSSSTCTKA.

The protein belongs to the CUT homeobox family. Binds DNA as a monomer.

The protein resides in the nucleus. Functionally, transcriptional activator. Binds the consensus sequence 5'-DHWATTGAYTWWD-3' on a variety of gene promoters such as those of HNF3B and TTR. Important for liver genes transcription. Stimulates the expression of Onecut3 in the developing endoderm. The polypeptide is Hepatocyte nuclear factor 6 (Onecut1) (Mus musculus (Mouse)).